A 91-amino-acid polypeptide reads, in one-letter code: PqqA binding protein (91 aa).

It belongs to the PqqD family. Monomer. Interacts with PqqE.

The protein operates within cofactor biosynthesis; pyrroloquinoline quinone biosynthesis. Functions as a PqqA binding protein and presents PqqA to PqqE, in the pyrroloquinoline quinone (PQQ) biosynthetic pathway. This is PqqA binding protein from Pseudomonas fluorescens (strain ATCC BAA-477 / NRRL B-23932 / Pf-5).